The following is a 346-amino-acid chain: Holliday junction branch migration complex subunit RuvB (346 aa).

The large ATPase domain (RuvB-L) stretch occupies residues 1-182 (MSEPARLISP…FGIPVRLSFY (182 aa)). ATP contacts are provided by residues Leu-21, Arg-22, Gly-63, Lys-66, Thr-67, Thr-68, 129–131 (EDF), Arg-172, Tyr-182, and Arg-219. Thr-67 serves as a coordination point for Mg(2+). Residues 183 to 253 (TVEELELIVR…IADEALTRLL (71 aa)) are small ATPAse domain (RuvB-S). The tract at residues 256-346 (NVGFDQLDKR…AQFRLFQEDD (91 aa)) is head domain (RuvB-H). DNA is bound by residues Arg-292, Arg-311, and Arg-316.

This sequence belongs to the RuvB family. Homohexamer. Forms an RuvA(8)-RuvB(12)-Holliday junction (HJ) complex. HJ DNA is sandwiched between 2 RuvA tetramers; dsDNA enters through RuvA and exits via RuvB. An RuvB hexamer assembles on each DNA strand where it exits the tetramer. Each RuvB hexamer is contacted by two RuvA subunits (via domain III) on 2 adjacent RuvB subunits; this complex drives branch migration. In the full resolvosome a probable DNA-RuvA(4)-RuvB(12)-RuvC(2) complex forms which resolves the HJ.

The protein localises to the cytoplasm. The enzyme catalyses ATP + H2O = ADP + phosphate + H(+). Its function is as follows. The RuvA-RuvB-RuvC complex processes Holliday junction (HJ) DNA during genetic recombination and DNA repair, while the RuvA-RuvB complex plays an important role in the rescue of blocked DNA replication forks via replication fork reversal (RFR). RuvA specifically binds to HJ cruciform DNA, conferring on it an open structure. The RuvB hexamer acts as an ATP-dependent pump, pulling dsDNA into and through the RuvAB complex. RuvB forms 2 homohexamers on either side of HJ DNA bound by 1 or 2 RuvA tetramers; 4 subunits per hexamer contact DNA at a time. Coordinated motions by a converter formed by DNA-disengaged RuvB subunits stimulates ATP hydrolysis and nucleotide exchange. Immobilization of the converter enables RuvB to convert the ATP-contained energy into a lever motion, pulling 2 nucleotides of DNA out of the RuvA tetramer per ATP hydrolyzed, thus driving DNA branch migration. The RuvB motors rotate together with the DNA substrate, which together with the progressing nucleotide cycle form the mechanistic basis for DNA recombination by continuous HJ branch migration. Branch migration allows RuvC to scan DNA until it finds its consensus sequence, where it cleaves and resolves cruciform DNA. This Rhizobium etli (strain CIAT 652) protein is Holliday junction branch migration complex subunit RuvB.